The chain runs to 338 residues: Lipoate-protein ligase A (338 aa).

The BPL/LPL catalytic domain maps to 29–216; it reads PATQRVLFLW…AFFSHYGERV (188 aa). ATP-binding positions include arginine 71, 76 to 79, and lysine 134; that span reads GAVF. A (R)-lipoate-binding site is contributed by lysine 134.

It belongs to the LplA family. In terms of assembly, monomer.

The protein localises to the cytoplasm. It catalyses the reaction L-lysyl-[lipoyl-carrier protein] + (R)-lipoate + ATP = N(6)-[(R)-lipoyl]-L-lysyl-[lipoyl-carrier protein] + AMP + diphosphate + H(+). It functions in the pathway protein modification; protein lipoylation via exogenous pathway; protein N(6)-(lipoyl)lysine from lipoate: step 1/2. It participates in protein modification; protein lipoylation via exogenous pathway; protein N(6)-(lipoyl)lysine from lipoate: step 2/2. Catalyzes both the ATP-dependent activation of exogenously supplied lipoate to lipoyl-AMP and the transfer of the activated lipoyl onto the lipoyl domains of lipoate-dependent enzymes. In Klebsiella pneumoniae (strain 342), this protein is Lipoate-protein ligase A.